The primary structure comprises 240 residues: UDP-2,3-diacylglucosamine hydrolase (240 aa).

Mn(2+)-binding residues include aspartate 7, histidine 9, aspartate 40, asparagine 78, and histidine 113. Substrate is bound at residue 78 to 79; it reads NR. 4 residues coordinate substrate: aspartate 121, serine 159, lysine 166, and histidine 194. Mn(2+)-binding residues include histidine 194 and histidine 196.

It belongs to the LpxH family. It depends on Mn(2+) as a cofactor.

It localises to the cell inner membrane. It catalyses the reaction UDP-2-N,3-O-bis[(3R)-3-hydroxytetradecanoyl]-alpha-D-glucosamine + H2O = 2-N,3-O-bis[(3R)-3-hydroxytetradecanoyl]-alpha-D-glucosaminyl 1-phosphate + UMP + 2 H(+). It participates in glycolipid biosynthesis; lipid IV(A) biosynthesis; lipid IV(A) from (3R)-3-hydroxytetradecanoyl-[acyl-carrier-protein] and UDP-N-acetyl-alpha-D-glucosamine: step 4/6. Functionally, hydrolyzes the pyrophosphate bond of UDP-2,3-diacylglucosamine to yield 2,3-diacylglucosamine 1-phosphate (lipid X) and UMP by catalyzing the attack of water at the alpha-P atom. Involved in the biosynthesis of lipid A, a phosphorylated glycolipid that anchors the lipopolysaccharide to the outer membrane of the cell. This chain is UDP-2,3-diacylglucosamine hydrolase, found in Pseudomonas putida (strain ATCC 47054 / DSM 6125 / CFBP 8728 / NCIMB 11950 / KT2440).